Here is a 343-residue protein sequence, read N- to C-terminus: Tribbles homolog 2 (343 aa).

Residues 25 to 50 (EELSSIRSAEPSQSFSPNLGSPSPPE) form a disordered region. The span at 29 to 45 (SIRSAEPSQSFSPNLGS) shows a compositional bias: polar residues. Residues 61-308 (IGKYLLLEPL…SQEILDHPWF (248 aa)) form the Protein kinase domain.

This sequence belongs to the protein kinase superfamily. CAMK Ser/Thr protein kinase family. Tribbles subfamily. In terms of tissue distribution, expressed in granulosa cells of the dominant follicles of the ovary and down-regulated in ovulatory follicles.

Its subcellular location is the cytoplasm. It is found in the cytoskeleton. In terms of biological role, interacts with MAPK kinases and regulates activation of MAP kinases. Does not display kinase activity. The polypeptide is Tribbles homolog 2 (Bos taurus (Bovine)).